Consider the following 517-residue polypeptide: Histone H4 transcription factor (517 aa).

3 consecutive C2H2-type zinc fingers follow at residues 15-39 (LQCE…VTQH), 129-153 (FLCL…VEAH), and 169-193 (VLCG…LRSH). The segment at 199 to 221 (VACPTCGGMFANNTKFLDHIRRQ) adopts a C2H2-type 4; degenerate zinc-finger fold. C2H2-type zinc fingers lie at residues 229 to 251 (FQCS…MRNH), 255 to 278 (YKCP…RFRH), 284 to 306 (FKCD…LDTH), 312 to 337 (YRCD…RKVH), and 345 to 368 (YKCH…RKKH). Residues 373 to 517 (PSGHPRFRYK…IAEEPEIQMV (145 aa)) form an interaction with NPAT region. Positions 374-407 (SGHPRFRYKEHEDGYMRLQLVRYESVELTQQLLR) are required for activation of histone H4 transcription and contributes to DNA-binding. The segment at 431–460 (TVPGEPGRKEEEEEGKGSEGTALSASQDNP) is disordered. The segment covering 451-460 (TALSASQDNP) has biased composition (polar residues).

Binds MBD2 and a histone deacetylase complex. Interacts with NPAT. Post-translationally, ubiquitinated. Ubiquitination may lead to proteasome-mediated degradation. In terms of tissue distribution, ubiquitous. Highly expressed in brain, heart, skeletal muscle, spleen, kidney, small intestine, placenta and liver.

Its subcellular location is the nucleus. Its function is as follows. Transcriptional repressor that binds to the consensus sequence 5'-CGGACGTT-3' and to the RB1 promoter. Transcriptional activator that promotes histone H4 gene transcription at the G1/S phase transition in conjunction with NPAT. Also activates transcription of the ATM and PRKDC genes. Autoregulates its expression by associating with its own promoter. The polypeptide is Histone H4 transcription factor (HINFP) (Homo sapiens (Human)).